We begin with the raw amino-acid sequence, 472 residues long: ATP synthase subunit beta (472 aa).

An ATP-binding site is contributed by 157-164 (GGAGVGKT).

It belongs to the ATPase alpha/beta chains family. As to quaternary structure, F-type ATPases have 2 components, CF(1) - the catalytic core - and CF(0) - the membrane proton channel. CF(1) has five subunits: alpha(3), beta(3), gamma(1), delta(1), epsilon(1). CF(0) has three main subunits: a(1), b(2) and c(9-12). The alpha and beta chains form an alternating ring which encloses part of the gamma chain. CF(1) is attached to CF(0) by a central stalk formed by the gamma and epsilon chains, while a peripheral stalk is formed by the delta and b chains.

Its subcellular location is the cell membrane. The enzyme catalyses ATP + H2O + 4 H(+)(in) = ADP + phosphate + 5 H(+)(out). Its function is as follows. Produces ATP from ADP in the presence of a proton gradient across the membrane. The catalytic sites are hosted primarily by the beta subunits. This is ATP synthase subunit beta from Desulforudis audaxviator (strain MP104C).